A 104-amino-acid polypeptide reads, in one-letter code: Protein RnfH (104 aa).

This sequence belongs to the UPF0125 (RnfH) family.

This is Protein RnfH from Pseudomonas fluorescens (strain Pf0-1).